The chain runs to 581 residues: Pentatricopeptide repeat-containing protein At3g56550 (581 aa).

PPR repeat units follow at residues 70–104 (STSD…SVSR), 106–140 (DLFT…GFLD), 141–171 (DAIV…MPVR), 172–206 (DLVS…GVCG), 207–241 (DSYT…RCES), 242–272 (CVFV…MRKR), 273–307 (DVLT…GVRP), 308–338 (NAIT…MSSQ), and 344–378 (NVKH…EDPV). The interval 379–454 (LWRTLLGSCK…VPGWSWIEIG (76 aa)) is type E motif. Residues 455-485 (DQVHKFVVDDKMHPESAVIYSELGEVINRAI) are type E(+) motif. Residues 486-581 (LAGYKPEDSN…DGICSCNDYW (96 aa)) form a type DYW motif region.

Belongs to the PPR family. PCMP-H subfamily.

This chain is Pentatricopeptide repeat-containing protein At3g56550 (PCMP-H80), found in Arabidopsis thaliana (Mouse-ear cress).